The primary structure comprises 484 residues: Glutamate--tRNA ligase (484 aa).

The 'HIGH' region motif lies at 12–22; that stretch reads PSPTGEPHVGT. The short motif at 253 to 257 is the 'KMSKS' region element; it reads KLSKR. ATP is bound at residue Lys256.

This sequence belongs to the class-I aminoacyl-tRNA synthetase family. Glutamate--tRNA ligase type 1 subfamily. In terms of assembly, monomer.

The protein resides in the cytoplasm. It catalyses the reaction tRNA(Glu) + L-glutamate + ATP = L-glutamyl-tRNA(Glu) + AMP + diphosphate. In terms of biological role, catalyzes the attachment of glutamate to tRNA(Glu) in a two-step reaction: glutamate is first activated by ATP to form Glu-AMP and then transferred to the acceptor end of tRNA(Glu). The sequence is that of Glutamate--tRNA ligase from Rhizobium leguminosarum bv. trifolii (strain WSM2304).